The chain runs to 165 residues: Peptide deformylase (165 aa).

Fe cation-binding residues include Cys88 and His130. Residue Glu131 is part of the active site. Position 134 (His134) interacts with Fe cation.

This sequence belongs to the polypeptide deformylase family. Fe(2+) serves as cofactor.

The enzyme catalyses N-terminal N-formyl-L-methionyl-[peptide] + H2O = N-terminal L-methionyl-[peptide] + formate. In terms of biological role, removes the formyl group from the N-terminal Met of newly synthesized proteins. Requires at least a dipeptide for an efficient rate of reaction. N-terminal L-methionine is a prerequisite for activity but the enzyme has broad specificity at other positions. This is Peptide deformylase from Borreliella burgdorferi (strain ATCC 35210 / DSM 4680 / CIP 102532 / B31) (Borrelia burgdorferi).